Here is a 213-residue protein sequence, read N- to C-terminus: Large ribosomal subunit protein uL3 (213 aa).

Residues lysine 124–proline 151 are disordered.

Belongs to the universal ribosomal protein uL3 family. As to quaternary structure, part of the 50S ribosomal subunit. Forms a cluster with proteins L14 and L19.

Its function is as follows. One of the primary rRNA binding proteins, it binds directly near the 3'-end of the 23S rRNA, where it nucleates assembly of the 50S subunit. This Geobacillus kaustophilus (strain HTA426) protein is Large ribosomal subunit protein uL3.